A 488-amino-acid chain; its full sequence is uncharacterized protein (488 aa).

27–38 (IVHFGFGAFHRA) is an NAD(+) binding site.

The protein belongs to the mannitol dehydrogenase family. UxuB subfamily.

This is an uncharacterized protein from Escherichia coli (strain K12).